We begin with the raw amino-acid sequence, 131 residues long: MSDIPGDLKFLKSHEWVRIEDNNRAIVGVSDHAQNLLGDLVYVELPNIGDHLDAGATAAVIESVKAASDIYSPVTGKVIEVNTTLSDKPETINEDPYGEGWIMVIEMQAPEEISNLLSPDDYTEVLESDEH.

The Lipoyl-binding domain occupies 24 to 106; that stretch reads RAIVGVSDHA…YGEGWIMVIE (83 aa). The residue at position 65 (Lys65) is an N6-lipoyllysine.

The protein belongs to the GcvH family. The glycine cleavage system is composed of four proteins: P, T, L and H. Requires (R)-lipoate as cofactor.

In terms of biological role, the glycine cleavage system catalyzes the degradation of glycine. The H protein shuttles the methylamine group of glycine from the P protein to the T protein. The protein is Glycine cleavage system H protein of Xylella fastidiosa (strain Temecula1 / ATCC 700964).